Consider the following 182-residue polypeptide: NADH-quinone oxidoreductase subunit I (182 aa).

2 4Fe-4S ferredoxin-type domains span residues 52–82 (LTRD…LQKA) and 92–121 (DFFR…LTPD). Residues cysteine 62, cysteine 65, cysteine 68, cysteine 72, cysteine 101, cysteine 104, cysteine 107, and cysteine 111 each coordinate [4Fe-4S] cluster.

The protein belongs to the complex I 23 kDa subunit family. In terms of assembly, NDH-1 is composed of 13 different subunits. Subunits NuoA, H, J, K, L, M, N constitute the membrane sector of the complex. [4Fe-4S] cluster serves as cofactor.

The protein resides in the cell inner membrane. The catalysed reaction is a quinone + NADH + 5 H(+)(in) = a quinol + NAD(+) + 4 H(+)(out). NDH-1 shuttles electrons from NADH, via FMN and iron-sulfur (Fe-S) centers, to quinones in the respiratory chain. The immediate electron acceptor for the enzyme in this species is believed to be ubiquinone. Couples the redox reaction to proton translocation (for every two electrons transferred, four hydrogen ions are translocated across the cytoplasmic membrane), and thus conserves the redox energy in a proton gradient. This Pseudomonas syringae pv. syringae (strain B728a) protein is NADH-quinone oxidoreductase subunit I.